The primary structure comprises 574 residues: Proline--tRNA ligase (574 aa).

The protein belongs to the class-II aminoacyl-tRNA synthetase family. ProS type 1 subfamily. As to quaternary structure, homodimer.

The protein resides in the cytoplasm. The enzyme catalyses tRNA(Pro) + L-proline + ATP = L-prolyl-tRNA(Pro) + AMP + diphosphate. Catalyzes the attachment of proline to tRNA(Pro) in a two-step reaction: proline is first activated by ATP to form Pro-AMP and then transferred to the acceptor end of tRNA(Pro). As ProRS can inadvertently accommodate and process non-cognate amino acids such as alanine and cysteine, to avoid such errors it has two additional distinct editing activities against alanine. One activity is designated as 'pretransfer' editing and involves the tRNA(Pro)-independent hydrolysis of activated Ala-AMP. The other activity is designated 'posttransfer' editing and involves deacylation of mischarged Ala-tRNA(Pro). The misacylated Cys-tRNA(Pro) is not edited by ProRS. In Aeromonas hydrophila subsp. hydrophila (strain ATCC 7966 / DSM 30187 / BCRC 13018 / CCUG 14551 / JCM 1027 / KCTC 2358 / NCIMB 9240 / NCTC 8049), this protein is Proline--tRNA ligase.